The primary structure comprises 480 residues: Probable cobyric acid synthase (480 aa).

Positions 246–431 (PVRIAVIRLP…MHGLFLNPSA (186 aa)) constitute a GATase cobBQ-type domain. Cysteine 325 (nucleophile) is an active-site residue. Histidine 423 is an active-site residue.

Belongs to the CobB/CobQ family. CobQ subfamily.

It functions in the pathway cofactor biosynthesis; adenosylcobalamin biosynthesis. Its function is as follows. Catalyzes amidations at positions B, D, E, and G on adenosylcobyrinic A,C-diamide. NH(2) groups are provided by glutamine, and one molecule of ATP is hydrogenolyzed for each amidation. This is Probable cobyric acid synthase from Methanoregula boonei (strain DSM 21154 / JCM 14090 / 6A8).